The sequence spans 1545 residues: ATP-binding cassette sub-family C member 9 (1545 aa).

Topologically, residues 1–30 are extracellular; it reads MSLSFCGNNISSYNIYHGVLQNPCFVDALN. Residue Asn-9 is glycosylated (N-linked (GlcNAc...) asparagine). Residues 31-51 traverse the membrane as a helical segment; the sequence is LVPHVFLLFITFPILFIGWGS. The Cytoplasmic segment spans residues 52–72; the sequence is QSSKVQIHHNTWLHFPGHNLR. Residues 73–93 form a helical membrane-spanning segment; sequence WILTFALLFVHVCEIAEGIVS. Topologically, residues 94–101 are extracellular; that stretch reads DSQRASRH. The chain crosses the membrane as a helical span at residues 102–122; it reads LHLFMPAVMGFVATTTSIVYY. Topologically, residues 123-132 are cytoplasmic; sequence HNIETSNFPK. The helical transmembrane segment at 133-153 threads the bilayer; that stretch reads LLLALFLYWVMAFITKTIKLV. Over 154–167 the chain is Extracellular; that stretch reads KYWQLGWGMSDLRF. Residues 168 to 188 form a helical membrane-spanning segment; it reads CITGVMVILNGLLMAVEINVI. At 189 to 301 the chain is on the cytoplasmic side; sequence RVRRYVFFMN…AFGRPILLSS (113 aa). Residues 297–594 enclose the ABC transmembrane type-1 1 domain; sequence ILLSSTFRYL…LSTVVRFAVK (298 aa). Residues 302–322 traverse the membrane as a helical segment; that stretch reads TFRYLADLLGFAGPLCISGIV. Residues 323-347 lie on the Extracellular side of the membrane; the sequence is QRVNEPKNNTTRFSETLSSKEFLEN. Residues Asn-330 and Asn-331 are each glycosylated (N-linked (GlcNAc...) asparagine). The helical transmembrane segment at 348-368 threads the bilayer; the sequence is AHVLAVLLFLALILQRTFLQA. The Cytoplasmic segment spans residues 369 to 420; the sequence is SYYVTIETGINLRGALLAMIYNKILRLSTSNLSMGEMTLGQINNLVAIETNQ. The chain crosses the membrane as a helical span at residues 421-441; sequence LMWFLFLCPNLWAMPVQIIMG. Over 442-452 the chain is Extracellular; that stretch reads VILLYNLLGSS. Residues 453 to 473 traverse the membrane as a helical segment; the sequence is ALVGAAVIVLLAPIQYFIATK. At 474 to 528 the chain is on the cytoplasmic side; it reads LAEAQKSTLDYSTERLKKTNEILKGIKLLKLYAWEHIFCKSVEETRMKELSSLKT. A helical membrane pass occupies residues 529 to 549; the sequence is FALYTSLSIFMNAAIPIAAVL. Residues 550–568 lie on the Extracellular side of the membrane; it reads ATFVTHAYASGNNLKPAEA. The helical transmembrane segment at 569 to 589 threads the bilayer; sequence FASLSLFHILVTPLFLLSTVV. Residues 590–986 lie on the Cytoplasmic side of the membrane; sequence RFAVKAIISV…TCWWYLTSGG (397 aa). Positions 668–908 constitute an ABC transporter 1 domain; sequence IKVTNGYFSW…DVELYEHWKT (241 aa). 701 to 708 lines the ATP pocket; it reads GQVGCGKS. The interval 940–963 is disordered; sequence REAKAQMEDEDEEEEEEEDEDDNM. The span at 947–962 shows a compositional bias: acidic residues; the sequence is EDEDEEEEEEEDEDDN. Residues 987 to 1007 traverse the membrane as a helical segment; that stretch reads FFLLFLMIFSKLLKHSVIVAI. Residues 990 to 1270 form the ABC transmembrane type-1 2 domain; the sequence is LFLMIFSKLL…VVRNLADLEV (281 aa). The Extracellular segment spans residues 1008–1030; that stretch reads DYWLATWTSEYSINDPGKADQTF. Residues 1031–1051 traverse the membrane as a helical segment; sequence YVAGFSILCGAGIFLCLVTSL. Residues 1052-1123 lie on the Cytoplasmic side of the membrane; sequence TVEWMGLTAA…TLLCLSAIGM (72 aa). A helical transmembrane segment spans residues 1124–1144; that stretch reads ISYATPVFLIALAPLGVAFYF. The Extracellular portion of the chain corresponds to 1145-1241; it reads IQKYFRVASK…IASISGSSNS (97 aa). A helical membrane pass occupies residues 1242 to 1262; it reads GLVGLGLLYALTITNYLNWVV. Residues 1263–1545 lie on the Cytoplasmic side of the membrane; that stretch reads RNLADLEVQM…LFSTLVMTNK (283 aa). The 235-residue stretch at 1308-1542 folds into the ABC transporter 2 domain; sequence IKIHDLCVRY…KNGLFSTLVM (235 aa). 1342-1349 provides a ligand contact to ATP; the sequence is GRTGSGKS.

Belongs to the ABC transporter superfamily. ABCC family. Conjugate transporter (TC 3.A.1.208) subfamily. In terms of assembly, interacts with KCNJ11. Interacts with KCNJ8. Expressed at high levels in heart, skeletal muscle and ovary. Moderate levels are found in brain, tongue and pancreatic islets. Low levels are found in lung, testis and adrenal gland. Expressed at very low levels in stomach, colon, thyroid and pituitary.

It is found in the membrane. Subunit of ATP-sensitive potassium channels (KATP). Can form cardiac and smooth muscle-type KATP channels with KCNJ11. KCNJ11 forms the channel pore while ABCC9 is required for activation and regulation. Can form a sulfonylurea-sensitive but ATP-insensitive potassium channel with KCNJ8. The polypeptide is ATP-binding cassette sub-family C member 9 (Abcc9) (Rattus norvegicus (Rat)).